The primary structure comprises 582 residues: Adenine deaminase (582 aa).

It belongs to the metallo-dependent hydrolases superfamily. Adenine deaminase family. The cofactor is Mn(2+).

The enzyme catalyses adenine + H2O + H(+) = hypoxanthine + NH4(+). The polypeptide is Adenine deaminase (Oceanobacillus iheyensis (strain DSM 14371 / CIP 107618 / JCM 11309 / KCTC 3954 / HTE831)).